The following is a 385-amino-acid chain: S-adenosylmethionine synthase (385 aa).

Residue histidine 15 participates in ATP binding. Aspartate 17 serves as a coordination point for Mg(2+). Glutamate 43 serves as a coordination point for K(+). Positions 56 and 99 each coordinate L-methionine. Residues 99–109 are flexible loop; it reads QSPDINQGVDR. Residues 164–166, 230–231, aspartate 239, 245–246, alanine 262, and lysine 266 each bind ATP; these read DAK, RF, and RK. Aspartate 239 contacts L-methionine. An L-methionine-binding site is contributed by lysine 270.

The protein belongs to the AdoMet synthase family. In terms of assembly, homotetramer; dimer of dimers. The cofactor is Mg(2+). Requires K(+) as cofactor.

It localises to the cytoplasm. The enzyme catalyses L-methionine + ATP + H2O = S-adenosyl-L-methionine + phosphate + diphosphate. Its pathway is amino-acid biosynthesis; S-adenosyl-L-methionine biosynthesis; S-adenosyl-L-methionine from L-methionine: step 1/1. In terms of biological role, catalyzes the formation of S-adenosylmethionine (AdoMet) from methionine and ATP. The overall synthetic reaction is composed of two sequential steps, AdoMet formation and the subsequent tripolyphosphate hydrolysis which occurs prior to release of AdoMet from the enzyme. This is S-adenosylmethionine synthase from Sodalis glossinidius (strain morsitans).